The primary structure comprises 340 residues: MLSLSKNWNTLIKPNKVAYENFPETNNKAKIVVEPLERGFGLTLGNAMRRVLLSSLQGAAITSIKIPAIEHEFSSIPGVKEDVSEVILNIKGIEVKMHVAEKRIMKLKATGPCVVKAGMIETGHDVEILNPDHVICDLAKDKQLEMELTCKVGKGYVLSTNSYEDNLPIGEIAIDALFNPVKSVTYKVENTRVGQVTDYDKLIMFVETNGDVLPEMAVGLAARILQEQLQLFISFEEQEEDKQVKTDALPFAPYLLKRVDELELSVRSANCLKNDNIIYIGDLVKRTESDMLRTPNFGRKSLNEIKEILAKFNLRFGMDVPDWPPENIQELSKRYEDSYN.

Residues 1–236 (MLSLSKNWNT…EQLQLFISFE (236 aa)) form an alpha N-terminal domain (alpha-NTD) region. The tract at residues 251-340 (FAPYLLKRVD…LSKRYEDSYN (90 aa)) is alpha C-terminal domain (alpha-CTD).

Belongs to the RNA polymerase alpha chain family. Homodimer. The RNAP catalytic core consists of 2 alpha, 1 beta, 1 beta' and 1 omega subunit. When a sigma factor is associated with the core the holoenzyme is formed, which can initiate transcription.

The enzyme catalyses RNA(n) + a ribonucleoside 5'-triphosphate = RNA(n+1) + diphosphate. DNA-dependent RNA polymerase catalyzes the transcription of DNA into RNA using the four ribonucleoside triphosphates as substrates. The protein is DNA-directed RNA polymerase subunit alpha of Rickettsia peacockii (strain Rustic).